A 141-amino-acid chain; its full sequence is uncharacterized protein (141 aa).

This is an uncharacterized protein from Human cytomegalovirus (strain AD169) (HHV-5).